Here is a 95-residue protein sequence, read N- to C-terminus: UPF0213 protein YPK_3712 (95 aa).

Positions 4-79 (SLWHLYLLRT…KQLSKQQKEK (76 aa)) constitute a GIY-YIG domain.

This sequence belongs to the UPF0213 family.

The protein is UPF0213 protein YPK_3712 of Yersinia pseudotuberculosis serotype O:3 (strain YPIII).